A 338-amino-acid polypeptide reads, in one-letter code: RNA 3'-terminal phosphate cyclase (338 aa).

Residues Gln-103 and 283-287 each bind ATP; that span reads YLADQ. His-308 acts as the Tele-AMP-histidine intermediate in catalysis.

The protein belongs to the RNA 3'-terminal cyclase family. Type 1 subfamily.

The protein resides in the cytoplasm. It catalyses the reaction a 3'-end 3'-phospho-ribonucleotide-RNA + ATP = a 3'-end 2',3'-cyclophospho-ribonucleotide-RNA + AMP + diphosphate. In terms of biological role, catalyzes the conversion of 3'-phosphate to a 2',3'-cyclic phosphodiester at the end of RNA. The mechanism of action of the enzyme occurs in 3 steps: (A) adenylation of the enzyme by ATP; (B) transfer of adenylate to an RNA-N3'P to produce RNA-N3'PP5'A; (C) and attack of the adjacent 2'-hydroxyl on the 3'-phosphorus in the diester linkage to produce the cyclic end product. The biological role of this enzyme is unknown but it is likely to function in some aspects of cellular RNA processing. The sequence is that of RNA 3'-terminal phosphate cyclase from Shigella boydii serotype 4 (strain Sb227).